Reading from the N-terminus, the 542-residue chain is Sterile alpha motif domain-containing protein 11 (542 aa).

The segment at 268–364 is disordered; sequence LLALPPQGPP…GRGLLSGSTL (97 aa). The span at 273-285 shows a compositional bias: pro residues; sequence PQGPPGPGPPIPP. Position 342 is a phosphothreonine (Thr342). One can recognise an SAM domain in the interval 404-469; it reads WTVDDVCNFV…AQVAKRLGRV (66 aa). Residues 486-542 are disordered; that stretch reads LQAPELSPGHQPLSPATTTSPYEGTHLPTGQASPKQENGSGTIALLSGAPDPSQLLQ. Ser499 carries the phosphoserine modification. Residues 499 to 526 are compositionally biased toward polar residues; it reads SPATTTSPYEGTHLPTGQASPKQENGSG.

In terms of assembly, self-associates. Component of a Polycomb group (PcG) multiprotein PRC1-like complex. Interacts with SAMD7 and PHC2. As to expression, expressed in the outer nuclear layer of rod photoreceptors in the retina (at protein level). Predominantly expressed in retinal photoreceptors and pineal gland.

It localises to the nucleus. Its function is as follows. Component of a Polycomb group (PcG) multiprotein PRC1-like complex, essential for establishing rod photoreceptor cell identity and function by silencing nonrod gene expression in developing rod photoreceptor cells. The chain is Sterile alpha motif domain-containing protein 11 (Samd11) from Mus musculus (Mouse).